Reading from the N-terminus, the 146-residue chain is Large ribosomal subunit protein uL15 (146 aa).

The interval 1 to 54 (MTIKLHDLRPAPGSKTPRTRVGRGEGSKGKTAGRGTKGTKARKQVPTTFEGGQM) is disordered.

The protein belongs to the universal ribosomal protein uL15 family. In terms of assembly, part of the 50S ribosomal subunit.

Its function is as follows. Binds to the 23S rRNA. This is Large ribosomal subunit protein uL15 from Mycobacterium marinum (strain ATCC BAA-535 / M).